A 105-amino-acid polypeptide reads, in one-letter code: Endogenous retrovirus group K member 16 Rec protein (105 aa).

A disordered region spans residues 1–41 (MNPSEMQRKAPPRRRRHRNRAPSSHKMNKMMMSEEQMKLPS). The span at 10-20 (APPRRRRHRNR) shows a compositional bias: basic residues. The Nuclear localization signal signature appears at 13-20 (RRRRHRNR). Residues 50 to 59 (WAQLNKLTQL) carry the Nuclear export signal motif.

As to quaternary structure, forms homodimers, homotrimers, and homotetramers via a C-terminal domain. Associates with XPO1 and with ZNF145.

The protein resides in the cytoplasm. Its subcellular location is the nucleus. The protein localises to the nucleolus. Its function is as follows. Retroviral replication requires the nuclear export and translation of unspliced, singly-spliced and multiply-spliced derivatives of the initial genomic transcript. Rec interacts with a highly structured RNA element (RcRE) present in the viral 3'LTR and recruits the cellular nuclear export machinery. This permits export to the cytoplasm of unspliced genomic or incompletely spliced subgenomic viral transcripts. This chain is Endogenous retrovirus group K member 16 Rec protein (ERVK-16), found in Homo sapiens (Human).